Here is a 435-residue protein sequence, read N- to C-terminus: Trigger factor (435 aa).

One can recognise a PPIase FKBP-type domain in the interval 161 to 246 (GDKLTLDFTG…IHKTEGPILP (86 aa)).

Belongs to the FKBP-type PPIase family. Tig subfamily.

The protein resides in the cytoplasm. The catalysed reaction is [protein]-peptidylproline (omega=180) = [protein]-peptidylproline (omega=0). Involved in protein export. Acts as a chaperone by maintaining the newly synthesized protein in an open conformation. Functions as a peptidyl-prolyl cis-trans isomerase. In Colwellia psychrerythraea (strain 34H / ATCC BAA-681) (Vibrio psychroerythus), this protein is Trigger factor.